The chain runs to 483 residues: Altronate oxidoreductase (483 aa).

Residue 18–29 (IIQFGEGNFLRA) participates in NAD(+) binding.

The protein belongs to the mannitol dehydrogenase family. UxaB subfamily.

It catalyses the reaction D-altronate + NAD(+) = keto-D-tagaturonate + NADH + H(+). It participates in carbohydrate metabolism; pentose and glucuronate interconversion. The sequence is that of Altronate oxidoreductase from Escherichia coli O6:K15:H31 (strain 536 / UPEC).